A 229-amino-acid polypeptide reads, in one-letter code: Small ribosomal subunit protein mS23 (229 aa).

It belongs to the mitochondrion-specific ribosomal protein mS23 family. In terms of assembly, component of the mitochondrial small ribosomal subunit.

It is found in the mitochondrion. This Yarrowia lipolytica (strain CLIB 122 / E 150) (Yeast) protein is Small ribosomal subunit protein mS23 (RSM25).